The chain runs to 306 residues: Lipoyl synthase (306 aa).

[4Fe-4S] cluster-binding residues include Cys-55, Cys-60, Cys-66, Cys-81, Cys-85, Cys-88, and Ser-294. One can recognise a Radical SAM core domain in the interval Trp-67–Arg-283.

This sequence belongs to the radical SAM superfamily. Lipoyl synthase family. [4Fe-4S] cluster is required as a cofactor.

It is found in the cytoplasm. It carries out the reaction [[Fe-S] cluster scaffold protein carrying a second [4Fe-4S](2+) cluster] + N(6)-octanoyl-L-lysyl-[protein] + 2 oxidized [2Fe-2S]-[ferredoxin] + 2 S-adenosyl-L-methionine + 4 H(+) = [[Fe-S] cluster scaffold protein] + N(6)-[(R)-dihydrolipoyl]-L-lysyl-[protein] + 4 Fe(3+) + 2 hydrogen sulfide + 2 5'-deoxyadenosine + 2 L-methionine + 2 reduced [2Fe-2S]-[ferredoxin]. It participates in protein modification; protein lipoylation via endogenous pathway; protein N(6)-(lipoyl)lysine from octanoyl-[acyl-carrier-protein]: step 2/2. Catalyzes the radical-mediated insertion of two sulfur atoms into the C-6 and C-8 positions of the octanoyl moiety bound to the lipoyl domains of lipoate-dependent enzymes, thereby converting the octanoylated domains into lipoylated derivatives. The sequence is that of Lipoyl synthase from Chloroflexus aggregans (strain MD-66 / DSM 9485).